We begin with the raw amino-acid sequence, 512 residues long: Histidine ammonia-lyase (512 aa).

The segment at residues 141-143 (ASG) is a cross-link (5-imidazolinone (Ala-Gly)). Ser142 carries the 2,3-didehydroalanine (Ser) modification.

This sequence belongs to the PAL/histidase family. Post-translationally, contains an active site 4-methylidene-imidazol-5-one (MIO), which is formed autocatalytically by cyclization and dehydration of residues Ala-Ser-Gly.

It localises to the cytoplasm. The catalysed reaction is L-histidine = trans-urocanate + NH4(+). The protein operates within amino-acid degradation; L-histidine degradation into L-glutamate; N-formimidoyl-L-glutamate from L-histidine: step 1/3. This Bacillus velezensis (strain DSM 23117 / BGSC 10A6 / LMG 26770 / FZB42) (Bacillus amyloliquefaciens subsp. plantarum) protein is Histidine ammonia-lyase.